The chain runs to 454 residues: Mogroside I-E synthase (454 aa).

The Proton acceptor role is filled by histidine 18. Residue histidine 18 coordinates an anthocyanidin. Catalysis depends on aspartate 111, which acts as the Charge relay. Histidine 144 contacts an anthocyanidin. A disulfide bridge links cysteine 259 with cysteine 331. Positions 278, 331, 333, 351, 352, 353, and 356 each coordinate UDP-alpha-D-glucose. Residue alanine 371 coordinates an anthocyanidin. UDP-alpha-D-glucose contacts are provided by aspartate 372 and glutamine 373.

Belongs to the UDP-glycosyltransferase family. Highly expressed in young fruits 15 days after anthesis (15-DAA).

The enzyme catalyses mogrol + UDP-alpha-D-glucose = mogroside IE + UDP + H(+). It participates in secondary metabolite biosynthesis; terpenoid biosynthesis. Activity is increased by Mg(2+). Its function is as follows. UDP-glycosyltransferase involved in the biosynthesis of cucurbitacin and mogroside tetracyclic triterpene natural products (e.g. siamenoside I and mogrosides IV, V and VI). Cucurbitacins have cytotoxic properties and exhibit deterrent taste as a defense barrier against herbivores. Mogrosides are nonsugar highly oxygenated compounds used as high-intensity zero-calorie sweeteners; they also possess pharmacological properties such as regulating immunity, lowering blood sugar and lipid levels, protecting the liver, and acting as antioxidants and antitumor agents. Catalyzes the transfer of a glucose moiety to the C-3 hydroxyl of mogrol to form mogroside I-E. Besides mogrol, UGT74AC1 also shows activity in vitro with quercetin and naringenin as substrate. In Siraitia grosvenorii (Monk's fruit), this protein is Mogroside I-E synthase.